Here is a 102-residue protein sequence, read N- to C-terminus: Small ribosomal subunit protein uS10 (102 aa).

The protein belongs to the universal ribosomal protein uS10 family. Part of the 30S ribosomal subunit.

Its function is as follows. Involved in the binding of tRNA to the ribosomes. The chain is Small ribosomal subunit protein uS10 from Finegoldia magna (strain ATCC 29328 / DSM 20472 / WAL 2508) (Peptostreptococcus magnus).